The chain runs to 891 residues: DNA mismatch repair protein MutS (891 aa).

646–653 (GPNMAGKS) lines the ATP pocket.

Belongs to the DNA mismatch repair MutS family.

This protein is involved in the repair of mismatches in DNA. It is possible that it carries out the mismatch recognition step. This protein has a weak ATPase activity. In Rickettsia massiliae (strain Mtu5), this protein is DNA mismatch repair protein MutS.